A 146-amino-acid polypeptide reads, in one-letter code: Basic phospholipase A2 beta-bungarotoxin A1 chain (146 aa).

The first 19 residues, 1-19 (MNPAHLLVLPAVCVSFLGA), serve as a signal peptide directing secretion. Residues 20–27 (SIIPPQSL) constitute a propeptide that is removed on maturation. 6 disulfides stabilise this stretch: Cys54-Cys145, Cys56-Cys72, Cys71-Cys126, Cys78-Cys119, Cys87-Cys112, and Cys105-Cys117. Residues Tyr55, Gly57, and Gly59 each coordinate Ca(2+). The active site involves His75. Residue Asp76 participates in Ca(2+) binding. Asp120 is an active-site residue.

Belongs to the phospholipase A2 family. Group I subfamily. D49 sub-subfamily. Heterodimer with beta-bungarotoxin B chain; disulfide-linked. The A chain has phospholipase A2 activity and the B chain shows homology with the basic protease inhibitors. Requires Ca(2+) as cofactor. Expressed by the venom gland.

It is found in the secreted. It carries out the reaction a 1,2-diacyl-sn-glycero-3-phosphocholine + H2O = a 1-acyl-sn-glycero-3-phosphocholine + a fatty acid + H(+). Its function is as follows. Snake venom phospholipase A2 (PLA2) that inhibits neuromuscular transmission by blocking acetylcholine release from the nerve termini. PLA2 catalyzes the calcium-dependent hydrolysis of the 2-acyl groups in 3-sn-phosphoglycerides. The polypeptide is Basic phospholipase A2 beta-bungarotoxin A1 chain (Bungarus flaviceps flaviceps (Red-headed krait)).